The sequence spans 326 residues: Pyruvate dehydrogenase E1 component subunit alpha (326 aa).

As to quaternary structure, heterodimer of an alpha and a beta chain. Thiamine diphosphate serves as cofactor.

The catalysed reaction is N(6)-[(R)-lipoyl]-L-lysyl-[protein] + pyruvate + H(+) = N(6)-[(R)-S(8)-acetyldihydrolipoyl]-L-lysyl-[protein] + CO2. Its function is as follows. The pyruvate dehydrogenase complex catalyzes the overall conversion of pyruvate to acetyl-CoA and CO(2). It contains multiple copies of three enzymatic components: pyruvate dehydrogenase (E1), dihydrolipoamide acetyltransferase (E2) and lipoamide dehydrogenase (E3). In Rickettsia typhi (strain ATCC VR-144 / Wilmington), this protein is Pyruvate dehydrogenase E1 component subunit alpha (pdhA).